We begin with the raw amino-acid sequence, 438 residues long: Gamma-glutamyl phosphate reductase (438 aa).

Belongs to the gamma-glutamyl phosphate reductase family.

Its subcellular location is the cytoplasm. The catalysed reaction is L-glutamate 5-semialdehyde + phosphate + NADP(+) = L-glutamyl 5-phosphate + NADPH + H(+). It participates in amino-acid biosynthesis; L-proline biosynthesis; L-glutamate 5-semialdehyde from L-glutamate: step 2/2. Catalyzes the NADPH-dependent reduction of L-glutamate 5-phosphate into L-glutamate 5-semialdehyde and phosphate. The product spontaneously undergoes cyclization to form 1-pyrroline-5-carboxylate. The sequence is that of Gamma-glutamyl phosphate reductase from Prochlorococcus marinus (strain MIT 9303).